We begin with the raw amino-acid sequence, 311 residues long: ATP synthase subunit gamma, mitochondrial (311 aa).

The N-terminal 33 residues, 1–33, are a transit peptide targeting the mitochondrion; that stretch reads MLSRIVSNNATRSVMCHQAQVGILYKTNPVRTY.

It belongs to the ATPase gamma chain family. As to quaternary structure, F-type ATPases have 2 components, CF(1) - the catalytic core - and CF(0) - the membrane proton channel. CF(1) has five subunits: alpha(3), beta(3), gamma(1), delta(1), epsilon(1). CF(0) has three main subunits: a, b and c.

Its subcellular location is the mitochondrion. The protein resides in the mitochondrion inner membrane. Mitochondrial membrane ATP synthase (F(1)F(0) ATP synthase or Complex V) produces ATP from ADP in the presence of a proton gradient across the membrane which is generated by electron transport complexes of the respiratory chain. F-type ATPases consist of two structural domains, F(1) - containing the extramembraneous catalytic core, and F(0) - containing the membrane proton channel, linked together by a central stalk and a peripheral stalk. During catalysis, ATP synthesis in the catalytic domain of F(1) is coupled via a rotary mechanism of the central stalk subunits to proton translocation. Part of the complex F(1) domain and the central stalk which is part of the complex rotary element. The gamma subunit protrudes into the catalytic domain formed of alpha(3)beta(3). Rotation of the central stalk against the surrounding alpha(3)beta(3) subunits leads to hydrolysis of ATP in three separate catalytic sites on the beta subunits. The polypeptide is ATP synthase subunit gamma, mitochondrial (ATP3) (Saccharomyces cerevisiae (strain ATCC 204508 / S288c) (Baker's yeast)).